The sequence spans 405 residues: Probable tRNA sulfurtransferase (405 aa).

The 106-residue stretch at glutamate 60–leucine 165 folds into the THUMP domain. ATP is bound by residues methionine 183 to leucine 184, histidine 208 to phenylalanine 209, arginine 265, glycine 287, and glutamine 296.

It belongs to the ThiI family.

Its subcellular location is the cytoplasm. It carries out the reaction [ThiI sulfur-carrier protein]-S-sulfanyl-L-cysteine + a uridine in tRNA + 2 reduced [2Fe-2S]-[ferredoxin] + ATP + H(+) = [ThiI sulfur-carrier protein]-L-cysteine + a 4-thiouridine in tRNA + 2 oxidized [2Fe-2S]-[ferredoxin] + AMP + diphosphate. It catalyses the reaction [ThiS sulfur-carrier protein]-C-terminal Gly-Gly-AMP + S-sulfanyl-L-cysteinyl-[cysteine desulfurase] + AH2 = [ThiS sulfur-carrier protein]-C-terminal-Gly-aminoethanethioate + L-cysteinyl-[cysteine desulfurase] + A + AMP + 2 H(+). The protein operates within cofactor biosynthesis; thiamine diphosphate biosynthesis. Its function is as follows. Catalyzes the ATP-dependent transfer of a sulfur to tRNA to produce 4-thiouridine in position 8 of tRNAs, which functions as a near-UV photosensor. Also catalyzes the transfer of sulfur to the sulfur carrier protein ThiS, forming ThiS-thiocarboxylate. This is a step in the synthesis of thiazole, in the thiamine biosynthesis pathway. The sulfur is donated as persulfide by IscS. This chain is Probable tRNA sulfurtransferase, found in Lactobacillus delbrueckii subsp. bulgaricus (strain ATCC BAA-365 / Lb-18).